The primary structure comprises 391 residues: Tryptophan synthase beta chain 2 (391 aa).

Residue K83 is modified to N6-(pyridoxal phosphate)lysine.

The protein belongs to the TrpB family. As to quaternary structure, tetramer of two alpha and two beta chains. Pyridoxal 5'-phosphate serves as cofactor.

It carries out the reaction (1S,2R)-1-C-(indol-3-yl)glycerol 3-phosphate + L-serine = D-glyceraldehyde 3-phosphate + L-tryptophan + H2O. It participates in amino-acid biosynthesis; L-tryptophan biosynthesis; L-tryptophan from chorismate: step 5/5. The beta subunit is responsible for the synthesis of L-tryptophan from indole and L-serine. The protein is Tryptophan synthase beta chain 2 (trpB2) of Chlamydia caviae (strain ATCC VR-813 / DSM 19441 / 03DC25 / GPIC) (Chlamydophila caviae).